The following is a 2253-amino-acid chain: Genome polyprotein (2253 aa).

Residues Cys627 and Cys694 are joined by a disulfide bond. The Cell attachment site motif lies at 750–752 (RVD). Positions 825 to 920 (LVYKNRGFYK…LFPGRKEITQ (96 aa)) constitute an LRAT domain. Catalysis depends on for protein 2A H-NC residues His835 and His846. Residue Cys904 is the For protein 2A H-NC; Acyl-thioester intermediate of the active site. Residues 1002–1022 (IVLYCHAPNMLTTMCLGTLLV) form a helical membrane-spanning segment. An SF3 helicase domain is found at 1205-1366 (YSEMMRVNVR…ASYSRNNKLD (162 aa)). Tyr1559 is subject to O-(5'-phospho-RNA)-tyrosine. Positions 1586-1775 (APYMQDLEHC…RAAAVHFISN (190 aa)) constitute a Peptidase C3 domain. Residues His1626, Asp1664, and Cys1739 each act as for protease 3C activity in the active site. Cys1970 serves as the catalytic Acyl-thioester intermediate. The RdRp catalytic domain occupies 2018–2132 (PYNYGLDYSS…SVSSPLDAEY (115 aa)). Mg(2+) contacts are provided by Asp2024 and Asp2118.

It belongs to the picornaviruses polyprotein family. As to quaternary structure, interacts with capsid protein VP1 and capsid protein VP3 to form heterotrimeric protomers. Five protomers subsequently associate to form pentamers which serve as building blocks for the capsid. In terms of assembly, interacts with capsid protein VP0, and capsid protein VP3 to form heterotrimeric protomers. Five protomers subsequently associate to form pentamers which serve as building blocks for the capsid. Interacts with capsid protein VP0 and capsid protein VP1 to form heterotrimeric protomers. Five protomers subsequently associate to form pentamers which serve as building blocks for the capsid. As to quaternary structure, homohexamer; forms a hexameric ring structure with 6-fold symmetry characteristic of AAA+ ATPases. In terms of assembly, homodimer. Interacts with host ACBD3. Interacts with RNA-directed RNA polymerase. As to quaternary structure, interacts with Viral protein genome-linked. Requires Mg(2+) as cofactor. Post-translationally, VPg is uridylylated by the polymerase and is covalently linked to the 5'-end of genomic RNA. This uridylylated form acts as a nucleotide-peptide primer for the polymerase. Specific enzymatic cleavages yield mature proteins. All cleavages are catalyzed by P3C.

It is found in the virion. The protein localises to the host cytoplasm. It localises to the host nucleus. The protein resides in the host nucleolus. Its subcellular location is the host cytoplasmic vesicle membrane. It is found in the host endoplasmic reticulum membrane. The protein localises to the host Golgi apparatus membrane. The catalysed reaction is RNA(n) + a ribonucleoside 5'-triphosphate = RNA(n+1) + diphosphate. It catalyses the reaction a ribonucleoside 5'-triphosphate + H2O = a ribonucleoside 5'-diphosphate + phosphate + H(+). It carries out the reaction Selective cleavage of Gln-|-Gly bond in the poliovirus polyprotein. In other picornavirus reactions Glu may be substituted for Gln, and Ser or Thr for Gly.. Functionally, forms an icosahedral capsid of pseudo T=3 symmetry together with capsid proteins VP1 and VP3. The capsid is 300 Angstroms in diameter, composed of 60 copies of each capsid protein and enclosing the viral positive strand RNA genome. The attachment to the host cell receptor induces virion internalization predominantly through clathrin-mediated endocytosis. Binds packaging signals present in the viral RNA. Forms an icosahedral capsid of pseudo T=3 symmetry together with capsid proteins VP0 and VP1. The capsid is 300 Angstroms in diameter, composed of 60 copies of each capsid protein and enclosing the viral positive strand RNA genome. The attachment to the host cell receptor induces virion internalization predominantly through clathrin-mediated endocytosis. Binds packaging signals present in the viral RNA. Its function is as follows. Forms an icosahedral capsid of pseudo T=3 symmetry together with capsid proteins VP0 and VP3. The capsid is 300 Angstroms in diameter, composed of 60 copies of each capsid protein and enclosing the viral positive strand RNA genome. The attachment to the host cell receptor induces virion internalization predominantly through clathrin-mediated endocytosis. Binds packaging signals present in the viral RNA. In terms of biological role, mediates self-processing of the polyprotein by a translational effect termed 'ribosome skipping'. Mechanistically, 2A1-mediated cleavage occurs between the C-terminal glycine and the proline of the downstream protein 2A2. Functionally, plays an essential role in the virus replication cycle by acting as a viroporin. Creates a pore in the host endoplasmic reticulum and as a consequence releases Ca2+ in the cytoplasm of infected cell. In turn, high levels of cytoplasmic calcium may trigger membrane trafficking and transport of viral ER-associated proteins to viroplasms, sites of viral genome replication. Induces and associates with structural rearrangements of intracellular membranes. Displays RNA-binding, nucleotide binding and NTPase activities. May play a role in virion morphogenesis and viral RNA encapsidation by interacting with the capsid protein VP3. Its function is as follows. Localizes the viral replication complex to the surface of membranous vesicles. It inhibits host cell endoplasmic reticulum-to-Golgi apparatus transport and causes the disassembly of the Golgi complex, possibly through GBF1 interaction. This would result in depletion of MHC, trail receptors and IFN receptors at the host cell surface. Plays an essential role in viral RNA replication by recruiting ACBD3 and PI4KB at the viral replication sites, thereby allowing the formation of the rearranged membranous structures where viral replication takes place. In terms of biological role, acts as a primer for viral RNA replication and remains covalently bound to viral genomic RNA. VPg is uridylylated prior to priming replication into VPg-pUpU. The VPg-pUpU is then used as primer on the genomic RNA poly(A) by the RNA-dependent RNA polymerase to replicate the viral genome. Following genome release from the infecting virion in the cytoplasm, the VPg-RNA linkage is probably removed by host TDP2. During the late stage of the replication cycle, host TDP2 is excluded from sites of viral RNA synthesis and encapsidation, allowing for the generation of progeny virions. Functionally, cysteine protease that generates mature viral proteins from the precursor polyprotein. In addition to its proteolytic activity, it binds to viral RNA, and thus influences viral genome replication. RNA and substrate bind cooperatively to the protease. Replicates the viral genomic RNA on the surface of intracellular membranes. Covalently attaches UMP to a tyrosine of VPg, which is used to prime RNA synthesis. The positive stranded RNA genome is first replicated at virus induced membranous vesicles, creating a dsRNA genomic replication form. This dsRNA is then used as template to synthesize positive stranded RNA genomes. ss(+)RNA genomes are either translated, replicated or encapsidated. The chain is Genome polyprotein from Ljunganvirus 1 (LV).